Here is a 130-residue protein sequence, read N- to C-terminus: DNA-directed RNA polymerase subunit omega (130 aa).

Disordered regions lie at residues 79–98 (EPEP…VDAD) and 109–130 (EEEL…EEDE).

It belongs to the RNA polymerase subunit omega family. In terms of assembly, the RNAP catalytic core consists of 2 alpha, 1 beta, 1 beta' and 1 omega subunit. When a sigma factor is associated with the core the holoenzyme is formed, which can initiate transcription.

The catalysed reaction is RNA(n) + a ribonucleoside 5'-triphosphate = RNA(n+1) + diphosphate. Promotes RNA polymerase assembly. Latches the N- and C-terminal regions of the beta' subunit thereby facilitating its interaction with the beta and alpha subunits. The chain is DNA-directed RNA polymerase subunit omega (rpoZ) from Bradyrhizobium diazoefficiens (strain JCM 10833 / BCRC 13528 / IAM 13628 / NBRC 14792 / USDA 110).